A 518-amino-acid chain; its full sequence is Probable lysine--tRNA ligase, cytoplasmic (518 aa).

The protein belongs to the class-II aminoacyl-tRNA synthetase family. Homodimer.

The protein localises to the cytoplasm. It carries out the reaction tRNA(Lys) + L-lysine + ATP = L-lysyl-tRNA(Lys) + AMP + diphosphate. This chain is Probable lysine--tRNA ligase, cytoplasmic, found in Enterocytozoon bieneusi (strain H348) (Microsporidian parasite).